We begin with the raw amino-acid sequence, 178 residues long: NADH-quinone oxidoreductase subunit I (178 aa).

2 consecutive 4Fe-4S ferredoxin-type domains span residues 45–74 (RHPD…VEAA) and 90–119 (KVYE…LGNE). Residues Cys54, Cys57, Cys60, Cys64, Cys99, Cys102, Cys105, and Cys109 each contribute to the [4Fe-4S] cluster site.

It belongs to the complex I 23 kDa subunit family. In terms of assembly, NDH-1 is composed of 15 different subunits. Subunits NuoA, H, J, K, L, M, N constitute the membrane sector of the complex. [4Fe-4S] cluster is required as a cofactor.

The protein localises to the cell membrane. It catalyses the reaction a quinone + NADH + 5 H(+)(in) = a quinol + NAD(+) + 4 H(+)(out). In terms of biological role, NDH-1 shuttles electrons from NADH, via FMN and iron-sulfur (Fe-S) centers, to quinones in the respiratory chain. The immediate electron acceptor for the enzyme in this species is believed to be ubiquinone. Couples the redox reaction to proton translocation (for every two electrons transferred, four hydrogen ions are translocated across the cytoplasmic membrane), and thus conserves the redox energy in a proton gradient. The protein is NADH-quinone oxidoreductase subunit I of Deinococcus radiodurans (strain ATCC 13939 / DSM 20539 / JCM 16871 / CCUG 27074 / LMG 4051 / NBRC 15346 / NCIMB 9279 / VKM B-1422 / R1).